Here is a 217-residue protein sequence, read N- to C-terminus: Large ribosomal subunit protein bL25 (217 aa).

The interval 187-217 (STPSGLEVEEETGEEESAEPEVIEKGKKEEE) is disordered. The segment covering 193 to 207 (EVEEETGEEESAEPE) has biased composition (acidic residues). Residues 208 to 217 (VIEKGKKEEE) are compositionally biased toward basic and acidic residues.

Belongs to the bacterial ribosomal protein bL25 family. CTC subfamily. In terms of assembly, part of the 50S ribosomal subunit; part of the 5S rRNA/L5/L18/L25 subcomplex. Contacts the 5S rRNA. Binds to the 5S rRNA independently of L5 and L18.

Functionally, this is one of the proteins that binds to the 5S RNA in the ribosome where it forms part of the central protuberance. The sequence is that of Large ribosomal subunit protein bL25 from Thermosipho africanus (strain TCF52B).